Here is a 689-residue protein sequence, read N- to C-terminus: Glycine--tRNA ligase beta subunit (689 aa).

It belongs to the class-II aminoacyl-tRNA synthetase family. As to quaternary structure, tetramer of two alpha and two beta subunits.

It localises to the cytoplasm. It carries out the reaction tRNA(Gly) + glycine + ATP = glycyl-tRNA(Gly) + AMP + diphosphate. The sequence is that of Glycine--tRNA ligase beta subunit (glyS) from Pasteurella multocida (strain Pm70).